The chain runs to 404 residues: Argininosuccinate synthase (404 aa).

ATP is bound by residues 12–20 (AYSGGLDTS) and Ala39. 2 residues coordinate L-citrulline: Tyr91 and Ser96. Gly121 contributes to the ATP binding site. L-aspartate contacts are provided by Thr123, Asn127, and Asp128. Asn127 provides a ligand contact to L-citrulline. L-citrulline is bound by residues Arg131, Ser180, Ser189, Glu265, and Tyr277.

This sequence belongs to the argininosuccinate synthase family. Type 1 subfamily. As to quaternary structure, homotetramer.

It is found in the cytoplasm. The catalysed reaction is L-citrulline + L-aspartate + ATP = 2-(N(omega)-L-arginino)succinate + AMP + diphosphate + H(+). The protein operates within amino-acid biosynthesis; L-arginine biosynthesis; L-arginine from L-ornithine and carbamoyl phosphate: step 2/3. The sequence is that of Argininosuccinate synthase from Vibrio parahaemolyticus serotype O3:K6 (strain RIMD 2210633).